We begin with the raw amino-acid sequence, 72 residues long: Large ribosomal subunit protein bL32 (72 aa).

This sequence belongs to the bacterial ribosomal protein bL32 family.

The chain is Large ribosomal subunit protein bL32 from Dehalococcoides mccartyi (strain ATCC BAA-2100 / JCM 16839 / KCTC 5957 / BAV1).